The following is a 179-amino-acid chain: Large ribosomal subunit protein uL6 (179 aa).

This sequence belongs to the universal ribosomal protein uL6 family. As to quaternary structure, part of the 50S ribosomal subunit.

In terms of biological role, this protein binds to the 23S rRNA, and is important in its secondary structure. It is located near the subunit interface in the base of the L7/L12 stalk, and near the tRNA binding site of the peptidyltransferase center. The polypeptide is Large ribosomal subunit protein uL6 (Bacillus anthracis).